A 225-amino-acid chain; its full sequence is tRNA (guanine-N(1)-)-methyltransferase (225 aa).

Residues glycine 112 and 132–137 (IGDYVL) each bind S-adenosyl-L-methionine.

The protein belongs to the RNA methyltransferase TrmD family. Homodimer.

Its subcellular location is the cytoplasm. It catalyses the reaction guanosine(37) in tRNA + S-adenosyl-L-methionine = N(1)-methylguanosine(37) in tRNA + S-adenosyl-L-homocysteine + H(+). In terms of biological role, specifically methylates guanosine-37 in various tRNAs. This Porphyromonas gingivalis (strain ATCC BAA-308 / W83) protein is tRNA (guanine-N(1)-)-methyltransferase.